A 62-amino-acid chain; its full sequence is MKLTCVLVVLLLVLPFGDLIGVCSTPEGSCVHNGCICQNAPCCHPSGCNWVNVCPGFLWDRS.

The first 19 residues, 1-19 (MKLTCVLVVLLLVLPFGDL), serve as a signal peptide directing secretion.

The protein belongs to the conotoxin O1 superfamily. Post-translationally, contains 4 disulfide bonds. Expressed by the venom duct.

The protein resides in the secreted. Functionally, probable neurotoxin. In Californiconus californicus (California cone), this protein is Conotoxin Cal12.2e.